Reading from the N-terminus, the 332-residue chain is Protein pelota homolog (332 aa).

It belongs to the eukaryotic release factor 1 family. Pelota subfamily. In terms of assembly, monomer. The cofactor is a divalent metal cation.

It localises to the cytoplasm. In terms of biological role, may function in recognizing stalled ribosomes, interact with stem-loop structures in stalled mRNA molecules, and effect endonucleolytic cleavage of the mRNA. May play a role in the release non-functional ribosomes and degradation of damaged mRNAs. Has endoribonuclease activity. In Pyrobaculum aerophilum (strain ATCC 51768 / DSM 7523 / JCM 9630 / CIP 104966 / NBRC 100827 / IM2), this protein is Protein pelota homolog.